Here is a 232-residue protein sequence, read N- to C-terminus: Ubiquinone biosynthesis O-methyltransferase (232 aa).

S-adenosyl-L-methionine contacts are provided by Arg36, Gly55, Asp76, and Leu120.

This sequence belongs to the methyltransferase superfamily. UbiG/COQ3 family.

The catalysed reaction is a 3-demethylubiquinol + S-adenosyl-L-methionine = a ubiquinol + S-adenosyl-L-homocysteine + H(+). It carries out the reaction a 3-(all-trans-polyprenyl)benzene-1,2-diol + S-adenosyl-L-methionine = a 2-methoxy-6-(all-trans-polyprenyl)phenol + S-adenosyl-L-homocysteine + H(+). It participates in cofactor biosynthesis; ubiquinone biosynthesis. In terms of biological role, O-methyltransferase that catalyzes the 2 O-methylation steps in the ubiquinone biosynthetic pathway. The polypeptide is Ubiquinone biosynthesis O-methyltransferase (Pseudomonas fluorescens (strain Pf0-1)).